Here is a 418-residue protein sequence, read N- to C-terminus: Queuine tRNA-ribosyltransferase accessory subunit 2 (418 aa).

Positions 325, 327, 330, and 356 each coordinate Zn(2+).

Belongs to the queuine tRNA-ribosyltransferase family. QTRT2 subfamily. As to quaternary structure, heterodimer of a catalytic subunit and an accessory subunit. Zn(2+) is required as a cofactor.

It localises to the cytoplasm. Non-catalytic subunit of the queuine tRNA-ribosyltransferase (TGT) that catalyzes the base-exchange of a guanine (G) residue with queuine (Q) at position 34 (anticodon wobble position) in tRNAs with GU(N) anticodons (tRNA-Asp, -Asn, -His and -Tyr), resulting in the hypermodified nucleoside queuosine (7-(((4,5-cis-dihydroxy-2-cyclopenten-1-yl)amino)methyl)-7-deazaguanosine). This Drosophila erecta (Fruit fly) protein is Queuine tRNA-ribosyltransferase accessory subunit 2.